We begin with the raw amino-acid sequence, 938 residues long: Isoleucine--tRNA ligase (938 aa).

The 'HIGH' region motif lies at 58-68 (PYANGSIHIGH). Glu561 contributes to the L-isoleucyl-5'-AMP binding site. The 'KMSKS' region signature appears at 602–606 (KMSKS). An ATP-binding site is contributed by Lys605. Zn(2+) is bound by residues Cys901, Cys904, Cys921, and Cys924.

It belongs to the class-I aminoacyl-tRNA synthetase family. IleS type 1 subfamily. In terms of assembly, monomer. The cofactor is Zn(2+).

Its subcellular location is the cytoplasm. It catalyses the reaction tRNA(Ile) + L-isoleucine + ATP = L-isoleucyl-tRNA(Ile) + AMP + diphosphate. In terms of biological role, catalyzes the attachment of isoleucine to tRNA(Ile). As IleRS can inadvertently accommodate and process structurally similar amino acids such as valine, to avoid such errors it has two additional distinct tRNA(Ile)-dependent editing activities. One activity is designated as 'pretransfer' editing and involves the hydrolysis of activated Val-AMP. The other activity is designated 'posttransfer' editing and involves deacylation of mischarged Val-tRNA(Ile). This chain is Isoleucine--tRNA ligase, found in Sodalis glossinidius (strain morsitans).